The chain runs to 20 residues: Cytochrome P450 3A5 (20 aa).

The protein belongs to the cytochrome P450 family. Heme is required as a cofactor.

It is found in the endoplasmic reticulum membrane. The protein localises to the microsome membrane. The catalysed reaction is an organic molecule + reduced [NADPH--hemoprotein reductase] + O2 = an alcohol + oxidized [NADPH--hemoprotein reductase] + H2O + H(+). 6-beta-testosterone hydroxylase. The protein is Cytochrome P450 3A5 of Papio sp. (Baboon).